Reading from the N-terminus, the 123-residue chain is Small ribosomal subunit protein uS12cz/uS12cy (123 aa).

It belongs to the universal ribosomal protein uS12 family. As to quaternary structure, part of the 30S ribosomal subunit.

The protein localises to the plastid. Its subcellular location is the chloroplast. Functionally, with S4 and S5 plays an important role in translational accuracy. Located at the interface of the 30S and 50S subunits. This Nymphaea alba (White water-lily) protein is Small ribosomal subunit protein uS12cz/uS12cy (rps12-A).